The sequence spans 466 residues: Ribulose bisphosphate carboxylase large chain (466 aa).

K4 is modified (N6,N6,N6-trimethyllysine). Substrate is bound by residues N113 and T163. The active-site Proton acceptor is the K165. K167 provides a ligand contact to substrate. Residues K191, D193, and E194 each contribute to the Mg(2+) site. An N6-carboxylysine modification is found at K191. H284 acts as the Proton acceptor in catalysis. Substrate is bound by residues R285, H317, and S369.

This sequence belongs to the RuBisCO large chain family. Type I subfamily. In terms of assembly, heterohexadecamer of 8 large chains and 8 small chains; disulfide-linked. The disulfide link is formed within the large subunit homodimers. Requires Mg(2+) as cofactor. The disulfide bond which can form in the large chain dimeric partners within the hexadecamer appears to be associated with oxidative stress and protein turnover.

Its subcellular location is the plastid. It localises to the chloroplast. The enzyme catalyses 2 (2R)-3-phosphoglycerate + 2 H(+) = D-ribulose 1,5-bisphosphate + CO2 + H2O. It carries out the reaction D-ribulose 1,5-bisphosphate + O2 = 2-phosphoglycolate + (2R)-3-phosphoglycerate + 2 H(+). Functionally, ruBisCO catalyzes two reactions: the carboxylation of D-ribulose 1,5-bisphosphate, the primary event in carbon dioxide fixation, as well as the oxidative fragmentation of the pentose substrate in the photorespiration process. Both reactions occur simultaneously and in competition at the same active site. The chain is Ribulose bisphosphate carboxylase large chain from Proboscidea louisianica (Louisiana Devil's-claw).